The chain runs to 242 residues: 1-(5-phosphoribosyl)-5-[(5-phosphoribosylamino)methylideneamino] imidazole-4-carboxamide isomerase (242 aa).

Asp-10 functions as the Proton acceptor in the catalytic mechanism. The Proton donor role is filled by Asp-131.

Belongs to the HisA/HisF family.

The protein resides in the cytoplasm. The enzyme catalyses 1-(5-phospho-beta-D-ribosyl)-5-[(5-phospho-beta-D-ribosylamino)methylideneamino]imidazole-4-carboxamide = 5-[(5-phospho-1-deoxy-D-ribulos-1-ylimino)methylamino]-1-(5-phospho-beta-D-ribosyl)imidazole-4-carboxamide. It participates in amino-acid biosynthesis; L-histidine biosynthesis; L-histidine from 5-phospho-alpha-D-ribose 1-diphosphate: step 4/9. The sequence is that of 1-(5-phosphoribosyl)-5-[(5-phosphoribosylamino)methylideneamino] imidazole-4-carboxamide isomerase from Granulibacter bethesdensis (strain ATCC BAA-1260 / CGDNIH1).